A 691-amino-acid chain; its full sequence is Elongation factor G (691 aa).

The region spanning 8–282 is the tr-type G domain; that stretch reads ERVRNIGIAA…AVVDYLPAPV (275 aa). Residues 17-24, 81-85, and 135-138 contribute to the GTP site; these read AHIDAGKT, DTPGH, and NKMD.

It belongs to the TRAFAC class translation factor GTPase superfamily. Classic translation factor GTPase family. EF-G/EF-2 subfamily.

It is found in the cytoplasm. Functionally, catalyzes the GTP-dependent ribosomal translocation step during translation elongation. During this step, the ribosome changes from the pre-translocational (PRE) to the post-translocational (POST) state as the newly formed A-site-bound peptidyl-tRNA and P-site-bound deacylated tRNA move to the P and E sites, respectively. Catalyzes the coordinated movement of the two tRNA molecules, the mRNA and conformational changes in the ribosome. In Prochlorococcus marinus (strain MIT 9211), this protein is Elongation factor G.